Here is a 2262-residue protein sequence, read N- to C-terminus: Klarsicht protein (2262 aa).

10 disordered regions span residues 1-140 (MEMQ…VGND), 345-410 (QQQQ…GEGN), 442-475 (AANGLDDDEDEEEDTEDDSFGYEGEATEDDLNEV), 514-561 (QSQS…PDIG), 800-832 (ATSSVDGLQSTAVSSTTATGGPLPPSDDSDKEN), 859-898 (SNYDSSSACSSSNSNSNSNSNSNGRLTETSATSRVTQLQM), 1000-1031 (HLPPRSPAKSAKSTKSQASNATVSGSTLVSPV), 1115-1157 (PSCK…SEGF), 1246-1316 (SGLA…ELGG), and 1533-1670 (VRRK…QQSR). The segment at 1–1774 (MEMQQENETG…KPTPELLDTE (1774 aa)) is required for apical microtubules localization. At 1–2215 (MEMQQENETG…KRGWAWRIAR (2215 aa)) the chain is on the cytoplasmic side. Basic and acidic residues predominate over residues 58–67 (KIEHTTKPLK). Over residues 131–140 (NYGTNSVGND) the composition is skewed to polar residues. Residues 345–402 (QQQQLSSQQPASLTSNCSSESTSESATKSSSLSSGFASDPVTTPIGTAAAAPPSSSTH) are compositionally biased toward low complexity. Residues 446-475 (LDDDEDEEEDTEDDSFGYEGEATEDDLNEV) show a composition bias toward acidic residues. The span at 514–525 (QSQSRSQQVPSQ) shows a compositional bias: low complexity. Residues 546–560 (EADEELEEEDEDPDI) are compositionally biased toward acidic residues. Low complexity-rich tracts occupy residues 809–818 (STAVSSTTAT) and 859–881 (SNYDSSSACSSSNSNSNSNSNSN). A compositionally biased stretch (polar residues) spans 882 to 894 (GRLTETSATSRVT). A compositionally biased stretch (low complexity) spans 1006–1018 (PAKSAKSTKSQAS). Residues 1019–1028 (NATVSGSTLV) show a composition bias toward polar residues. Polar residues predominate over residues 1246–1259 (SGLASHSISESALD). Positions 1267–1280 (PRAASSSGTGSNAA) are enriched in low complexity. Residues 1288–1299 (SLRRRKARKKRI) show a composition bias toward basic residues. Residues 1550 to 1559 (QSDQQQQQLQ) are compositionally biased toward low complexity. The segment covering 1560 to 1583 (VTPSLSASATALMTTPKNQSTSHQ) has biased composition (polar residues). Basic and acidic residues-rich tracts occupy residues 1586-1596 (HRAESVGRKLD) and 1610-1640 (RTSESDTSTRRRRTVTADERRRSSRNLEKCI). Residues 1809–1842 (LTKQERRLQSALEEQEQQQESEQLKQQKLVEEEK) adopt a coiled-coil conformation. The segment at 2092-2205 (HQQKQQIQQN…GEGADPAQTS (114 aa)) is disordered. Positions 2093-2105 (QQKQQIQQNQTQQ) are enriched in low complexity. The segment covering 2130 to 2142 (RRGKGARKARQAK) has biased composition (basic residues). Positions 2207–2262 (RGWAWRIARAAVPMQVALFTIFCAACLMQPNCCDNLNNLSMSFTPQLRYIRGPPPI) constitute a KASH domain. The helical; Anchor for type IV membrane protein transmembrane segment at 2216–2236 (AAVPMQVALFTIFCAACLMQP) threads the bilayer. Over 2237–2262 (NCCDNLNNLSMSFTPQLRYIRGPPPI) the chain is Perinuclear space.

It belongs to the nesprin family. Core component of LINC complexes which are composed of inner nuclear membrane SUN domain-containing proteins coupled to outer nuclear membrane KASH domain-containing nesprins. Interacts with kud. Interacts with Msp300; this interaction allows the anchoring of Msp300 nuclear ring structure to the nuclear envelope. As to expression, expressed ubiquitously in the eye disk, but at much higher levels posterior to the morphogenetic furrow. Expressed in R-cells and also in non-neural cone cells.

The protein resides in the cytoplasm. It is found in the cytoskeleton. The protein localises to the microtubule organizing center. It localises to the perinuclear region. Its subcellular location is the nucleus membrane. The protein resides in the nucleus envelope. In terms of biological role, component of the LINC (LInker of Nucleoskeleton and Cytoskeleton) complex involved in the connection between the nuclear lamina and the cytoskeleton. Plays a role in the nuclear positioning and links the nucleus to the microtubule organizing center (MTOC). Collaborates with Klar to promote even spacing of the myonuclei at the periphery of striated muscle fibers by mediating a tight association between a nuclear ring structure of Msp300 and the plus ends of a unique astral microtubule (MT) network. This is Klarsicht protein from Drosophila melanogaster (Fruit fly).